We begin with the raw amino-acid sequence, 444 residues long: Phosphoglucosamine mutase (444 aa).

Catalysis depends on Ser-100, which acts as the Phosphoserine intermediate. Residues Ser-100, Asp-240, Asp-242, and Asp-244 each contribute to the Mg(2+) site. At Ser-100 the chain carries Phosphoserine.

The protein belongs to the phosphohexose mutase family. Mg(2+) serves as cofactor. Post-translationally, activated by phosphorylation.

The catalysed reaction is alpha-D-glucosamine 1-phosphate = D-glucosamine 6-phosphate. Catalyzes the conversion of glucosamine-6-phosphate to glucosamine-1-phosphate. In Moorella thermoacetica (strain ATCC 39073 / JCM 9320), this protein is Phosphoglucosamine mutase.